Here is a 218-residue protein sequence, read N- to C-terminus: Urease accessory protein UreG (218 aa).

22-29 (GPVGSGKT) serves as a coordination point for GTP.

It belongs to the SIMIBI class G3E GTPase family. UreG subfamily. As to quaternary structure, homodimer. UreD, UreF and UreG form a complex that acts as a GTP-hydrolysis-dependent molecular chaperone, activating the urease apoprotein by helping to assemble the nickel containing metallocenter of UreC. The UreE protein probably delivers the nickel.

It is found in the cytoplasm. Functionally, facilitates the functional incorporation of the urease nickel metallocenter. This process requires GTP hydrolysis, probably effectuated by UreG. The chain is Urease accessory protein UreG from Polaromonas sp. (strain JS666 / ATCC BAA-500).